A 306-amino-acid chain; its full sequence is MSENARDPRLVVEILSEALPYIQRFSGKTVVVKYGGNAMTEDTLIDSFARDMVLMKEVGINPVVVHGGGPQIGELLERLNIESRFVGGMRVTDAETMDVVEMVLGGLVNKSIVNLINRSGGKAIGLTGKDGAQITARQLRVEHQTPEMTAPEIIDIGHVGEVEHIATDLIEMLAARDFIPVIAPIGVDAEGHSYNINADLVAGKVAEALGAEKLMLLTNVAGLMNAEGEVMTGLSTAQVDAMIGDGTIHGGMLPKIRCALEAVKGGVASSHIIDGRVPHATLLEIFTNAGVGTLITDTASDVSPED.

Residues 68–69 (GG), Arg90, and Asn195 each bind substrate.

This sequence belongs to the acetylglutamate kinase family. ArgB subfamily.

It localises to the cytoplasm. The catalysed reaction is N-acetyl-L-glutamate + ATP = N-acetyl-L-glutamyl 5-phosphate + ADP. Its pathway is amino-acid biosynthesis; L-arginine biosynthesis; N(2)-acetyl-L-ornithine from L-glutamate: step 2/4. Catalyzes the ATP-dependent phosphorylation of N-acetyl-L-glutamate. This chain is Acetylglutamate kinase, found in Chromohalobacter salexigens (strain ATCC BAA-138 / DSM 3043 / CIP 106854 / NCIMB 13768 / 1H11).